We begin with the raw amino-acid sequence, 311 residues long: Tyrosine recombinase XerD (311 aa).

The Core-binding (CB) domain maps to 1–83; the sequence is MEFIAQFLEM…TIKSYYAFLI (83 aa). The region spanning 104–299 is the Tyr recombinase domain; sequence KLPIILSIDQ…HTNHLKKALL (196 aa). Catalysis depends on residues Arg-145, Lys-176, His-251, Arg-254, and His-277. Tyr-286 acts as the O-(3'-phospho-DNA)-tyrosine intermediate in catalysis.

This sequence belongs to the 'phage' integrase family. XerD subfamily. In terms of assembly, forms a cyclic heterotetrameric complex composed of two molecules of XerC and two molecules of XerD.

The protein resides in the cytoplasm. Site-specific tyrosine recombinase, which acts by catalyzing the cutting and rejoining of the recombining DNA molecules. The XerC-XerD complex is essential to convert dimers of the bacterial chromosome into monomers to permit their segregation at cell division. It also contributes to the segregational stability of plasmids. This is Tyrosine recombinase XerD from Rickettsia prowazekii (strain Madrid E).